Reading from the N-terminus, the 541-residue chain is T-complex protein 1 subunit epsilon (541 aa).

A2 is subject to N-acetylalanine. K20 participates in a covalent cross-link: Glycyl lysine isopeptide (Lys-Gly) (interchain with G-Cter in SUMO2). S26 is modified (phosphoserine). Residue G53 participates in ADP binding. G53 is an ATP binding site. Residue D104 coordinates Mg(2+). 4 residues coordinate ADP: G105, T106, T107, and S175. Residues T106 and T107 each coordinate ATP. Glycyl lysine isopeptide (Lys-Gly) (interchain with G-Cter in SUMO2) cross-links involve residues K210, K214, K265, K275, and K279. S346 is modified (phosphoserine). A Glycyl lysine isopeptide (Lys-Gly) (interchain with G-Cter in SUMO2) cross-link involves residue K392. ADP-binding residues include G422, D492, E508, and K513. G422 lines the ATP pocket. Phosphoserine is present on S539.

This sequence belongs to the TCP-1 chaperonin family. As to quaternary structure, component of the chaperonin-containing T-complex (TRiC), a hexadecamer composed of two identical back-to-back stacked rings enclosing a protein folding chamber. Each ring is made up of eight different subunits: TCP1/CCT1, CCT2, CCT3, CCT4, CCT5, CCT6A/CCT6, CCT7, CCT8. Interacts with PACRG. Interacts with DNAAF4. Interacts with DLEC1. Interacts with SPMAP2. Post-translationally, ubiquitinated by the DCX(DCAF12) complex specifically recognizes the diglutamate (Glu-Glu) at the C-terminus, leading to its degradation.

The protein resides in the cytoplasm. It is found in the cytoskeleton. The protein localises to the microtubule organizing center. It localises to the centrosome. It catalyses the reaction ATP + H2O = ADP + phosphate + H(+). Functionally, component of the chaperonin-containing T-complex (TRiC), a molecular chaperone complex that assists the folding of actin, tubulin and other proteins upon ATP hydrolysis. The TRiC complex mediates the folding of WRAP53/TCAB1, thereby regulating telomere maintenance. As part of the TRiC complex may play a role in the assembly of BBSome, a complex involved in ciliogenesis regulating transports vesicles to the cilia. The protein is T-complex protein 1 subunit epsilon (CCT5) of Homo sapiens (Human).